Reading from the N-terminus, the 209-residue chain is Large ribosomal subunit protein uL3 (209 aa).

The interval F117–G142 is disordered.

This sequence belongs to the universal ribosomal protein uL3 family. In terms of assembly, part of the 50S ribosomal subunit. Forms a cluster with proteins L14 and L19.

In terms of biological role, one of the primary rRNA binding proteins, it binds directly near the 3'-end of the 23S rRNA, where it nucleates assembly of the 50S subunit. This is Large ribosomal subunit protein uL3 from Clostridioides difficile (strain 630) (Peptoclostridium difficile).